Here is a 192-residue protein sequence, read N- to C-terminus: Imidazole glycerol phosphate synthase subunit HisH (192 aa).

A Glutamine amidotransferase type-1 domain is found at 1–192 (MIAIIDYGLG…QALKGGFIND (192 aa)). Cys77 (nucleophile) is an active-site residue. Catalysis depends on residues His169 and Glu171.

In terms of assembly, heterodimer of HisH and HisF.

The protein resides in the cytoplasm. It catalyses the reaction 5-[(5-phospho-1-deoxy-D-ribulos-1-ylimino)methylamino]-1-(5-phospho-beta-D-ribosyl)imidazole-4-carboxamide + L-glutamine = D-erythro-1-(imidazol-4-yl)glycerol 3-phosphate + 5-amino-1-(5-phospho-beta-D-ribosyl)imidazole-4-carboxamide + L-glutamate + H(+). The enzyme catalyses L-glutamine + H2O = L-glutamate + NH4(+). The protein operates within amino-acid biosynthesis; L-histidine biosynthesis; L-histidine from 5-phospho-alpha-D-ribose 1-diphosphate: step 5/9. In terms of biological role, IGPS catalyzes the conversion of PRFAR and glutamine to IGP, AICAR and glutamate. The HisH subunit catalyzes the hydrolysis of glutamine to glutamate and ammonia as part of the synthesis of IGP and AICAR. The resulting ammonia molecule is channeled to the active site of HisF. The chain is Imidazole glycerol phosphate synthase subunit HisH from Staphylococcus epidermidis (strain ATCC 12228 / FDA PCI 1200).